Here is a 529-residue protein sequence, read N- to C-terminus: Bifunctional purine biosynthesis protein PurH (529 aa).

The MGS-like domain maps to Met1–Val148.

The protein belongs to the PurH family.

It carries out the reaction (6R)-10-formyltetrahydrofolate + 5-amino-1-(5-phospho-beta-D-ribosyl)imidazole-4-carboxamide = 5-formamido-1-(5-phospho-D-ribosyl)imidazole-4-carboxamide + (6S)-5,6,7,8-tetrahydrofolate. The catalysed reaction is IMP + H2O = 5-formamido-1-(5-phospho-D-ribosyl)imidazole-4-carboxamide. It functions in the pathway purine metabolism; IMP biosynthesis via de novo pathway; 5-formamido-1-(5-phospho-D-ribosyl)imidazole-4-carboxamide from 5-amino-1-(5-phospho-D-ribosyl)imidazole-4-carboxamide (10-formyl THF route): step 1/1. It participates in purine metabolism; IMP biosynthesis via de novo pathway; IMP from 5-formamido-1-(5-phospho-D-ribosyl)imidazole-4-carboxamide: step 1/1. The polypeptide is Bifunctional purine biosynthesis protein PurH (Salmonella enteritidis PT4 (strain P125109)).